The sequence spans 333 residues: MSKPVVLSGVQPSGELTIGNYLGALRQWVKMQDDYECLFCIVDLHAITVRQDPESLRKATLDVLALYLACGIDPEKSTIFIQSHVPEHTQLAWVLNCYTYFGEMGRMTQFKDKSARHAENINVGLFTYPVLMAADILLYQANQVPVGEDQKQHLEITRDIANRFNALYGDLFAVPEPFIPKAGARVMSLLEPEKKMSKSDENRNNVIGLLEDPKAVAKKIKRAVTDSDEPPVVRYDVQNKAGVSNLLDILSGVTGKSIAELETEFEGKMYGHLKGTVADEVSAMLTTLQERFHHFRNNEALLNDIAREGAQKARERAKATLDAVYQAVGFVSL.

ATP contacts are provided by residues 11 to 13 (QPS) and 19 to 20 (GN). The 'HIGH' region motif lies at 12-20 (PSGELTIGN). Asp-135 serves as a coordination point for L-tryptophan. ATP contacts are provided by residues 147–149 (GED), Val-186, and 195–199 (KMSKS). A 'KMSKS' region motif is present at residues 195-199 (KMSKS).

The protein belongs to the class-I aminoacyl-tRNA synthetase family. In terms of assembly, homodimer.

It is found in the cytoplasm. It catalyses the reaction tRNA(Trp) + L-tryptophan + ATP = L-tryptophyl-tRNA(Trp) + AMP + diphosphate + H(+). Its function is as follows. Catalyzes the attachment of tryptophan to tRNA(Trp). This is Tryptophan--tRNA ligase from Pasteurella multocida (strain Pm70).